Reading from the N-terminus, the 230-residue chain is Urease accessory protein UreE (230 aa).

Over residues 200–210 (HAIHSHGTGHT) the composition is skewed to basic residues. Residues 200–230 (HAIHSHGTGHTHSHDHDHSHSHGDHDHDHKH) form a disordered region. Residues 211–230 (HSHDHDHSHSHGDHDHDHKH) show a composition bias toward basic and acidic residues.

Belongs to the UreE family.

Its subcellular location is the cytoplasm. Functionally, involved in urease metallocenter assembly. Binds nickel. Probably functions as a nickel donor during metallocenter assembly. This Yersinia enterocolitica serotype O:8 / biotype 1B (strain NCTC 13174 / 8081) protein is Urease accessory protein UreE.